We begin with the raw amino-acid sequence, 115 residues long: Large ribosomal subunit protein P2 (115 aa).

M1 carries the post-translational modification N-acetylmethionine. Residues S17 and S19 each carry the phosphoserine modification. K21 is modified (N6-acetyllysine; alternate). K21 carries the post-translational modification N6-succinyllysine; alternate. The span at 76–90 (APGSAAPAAGSAPAA) shows a compositional bias: low complexity. The segment at 76-115 (APGSAAPAAGSAPAAAEEKKDEKKEESEESDDDMGFGLFD) is disordered. 2 positions are modified to phosphoserine: S79 and S86. A compositionally biased stretch (basic and acidic residues) spans 91-101 (AEEKKDEKKEE). S102 and S105 each carry phosphoserine.

It belongs to the eukaryotic ribosomal protein P1/P2 family. Heterodimer with RPLP1 at the lateral ribosomal stalk of the large ribosomal subunit.

Its function is as follows. Plays an important role in the elongation step of protein synthesis. The protein is Large ribosomal subunit protein P2 (Rplp2) of Mus musculus (Mouse).